Reading from the N-terminus, the 328-residue chain is 2-oxoglutarate-dependent dioxygenase gloF (328 aa).

A Fe2OG dioxygenase domain is found at 175-289; the sequence is DTSELRMNHY…RYSVAYFGKP (115 aa). The Fe cation site is built by His201, Asp203, and His261. A 2-oxoglutarate-binding site is contributed by Arg280.

The protein belongs to the iron/ascorbate-dependent oxidoreductase family. Fe(2+) is required as a cofactor.

It participates in mycotoxin biosynthesis. Functionally, 2-oxoglutarate-dependent dioxygenase; part of the gene cluster that mediates the biosynthesis of pneumocandins, lipohexapeptides of the echinocandin family that prevent fungal cell wall formation by non-competitive inhibition of beta-1,3-glucan synthase. The 10,12-dimethylmyristoyl side chain is synthesized by the reducing polyketide synthase gloL/GLPKS4. The thioesterase gloN/GLHYD exclusively interacts with gloL/GLPKS4 to maintain turnover of the polyketide side chain. The 10R,12S-dimethylmyristic acid is then transferred to the first thiolation domain of the nonribosomal peptide synthetase gloA/GLNRPS4 by the acyl-AMP ligase gloD/GLligase, followed by its acylation to L-ornithine to trigger elongation of the cyclic hexapeptide. L-ornithine, 4R-hydroxyl-L-proline (generated from L-proline by the dioxygenase gloF/GLOXY2), 3S-hydroxyl-L-homotyrosine (generated by gloG/GLHtyB, gloH/GLHtyA, gloI/GLHtyC, gloJ/GLHtyD and hydroxylated at C-3 by the dioxygenase gloM/GLOXY1), 3R-hydroxyl-L-glutamine (generated from L-glutamine probably by the dioxygenase gloE/GLOXY3) and 3S-hydroxyl-L-proline (generated from L-proline by the dioxygenase gloF/GLOXY2 to yield pneumocandin B0), or 3S-hydroxyl-4S-methyl-L-proline (generated from L-leucine by the dioxygenase gloC/GLOXY4 to yield pneumocandin A0) are sequentially added to the growing chain. The last C domain of gloA/GLNRPS4 is proposed to be responsible for cyclization by condensation to form the peptide bond between L-ornithine and 3S-hydroxyl-4S-methyl-L-proline (for pneumocandin A0) or 3S-hydroxyl-L-proline (for pneumocandin B0). Finally, the subsequent C-4 hydroxylation of 3S-hydroxyl-L-homotyrosine and L-ornithine dihydroxylation at C-4 and C-5 are performed by the cytochrome P450 monooxygenases gloP/GLP450-1 and gloO/GLP450-2, respectively. This Glarea lozoyensis (strain ATCC 20868 / MF5171) protein is 2-oxoglutarate-dependent dioxygenase gloF.